The following is a 432-amino-acid chain: Glutamate-1-semialdehyde 2,1-aminomutase (432 aa).

K269 carries the N6-(pyridoxal phosphate)lysine modification.

Belongs to the class-III pyridoxal-phosphate-dependent aminotransferase family. HemL subfamily. As to quaternary structure, homodimer. It depends on pyridoxal 5'-phosphate as a cofactor.

It localises to the cytoplasm. The enzyme catalyses (S)-4-amino-5-oxopentanoate = 5-aminolevulinate. Its pathway is porphyrin-containing compound metabolism; protoporphyrin-IX biosynthesis; 5-aminolevulinate from L-glutamyl-tRNA(Glu): step 2/2. This is Glutamate-1-semialdehyde 2,1-aminomutase from Desulforudis audaxviator (strain MP104C).